The primary structure comprises 257 residues: Probable amino-acid ABC transporter-binding protein HI_1080 (257 aa).

Positions 1 to 23 are cleaved as a signal peptide; it reads MKKLLFTTALLTGAIAFSTFSHA.

It belongs to the bacterial solute-binding protein 3 family.

It is found in the periplasm. Probably part of a binding-protein-dependent transport system for an amino acid. In Haemophilus influenzae (strain ATCC 51907 / DSM 11121 / KW20 / Rd), this protein is Probable amino-acid ABC transporter-binding protein HI_1080.